The primary structure comprises 797 residues: N-acetylneuraminate (7)9-O-acetyltransferase (797 aa).

Over 1–18 the chain is Cytoplasmic; it reads MAALAYNLGKREINHYFS. The chain crosses the membrane as a helical span at residues 19–39; it reads VRSAKVLALVAVLLLAACHLA. Over 40–313 the chain is Lumenal; that stretch reads SRRYRGNDSC…QPRPPLTLIQ (274 aa). Asparagine 46 carries N-linked (GlcNAc...) asparagine glycosylation. Serine 94 serves as the catalytic Acyl-ester intermediate. 2 N-linked (GlcNAc...) asparagine glycosylation sites follow: asparagine 175 and asparagine 187. Catalysis depends on residues aspartate 270 and histidine 273. A helical membrane pass occupies residues 314 to 334; it reads KLAACFFTLSIIGYFIFYVIH. Residues 335–363 are Cytoplasmic-facing; the sequence is RNAHRKNKPCTDLESGEEKKNIINTPVSS. The helical transmembrane segment at 364 to 384 threads the bilayer; it reads LEILLQSFCKLGLIMAYFYMC. Topologically, residues 385 to 395 are lumenal; the sequence is DRANLFMKENK. A helical membrane pass occupies residues 396–416; that stretch reads FYTHSSFFIPIIYILVLGVFY. Topologically, residues 417–439 are cytoplasmic; that stretch reads NENTKETKVLNREQTDEWKGWMQ. Residues 440–460 traverse the membrane as a helical segment; that stretch reads LVILIYHISGASTFLPVYMHI. Position 461 (arginine 461) is a topological domain, lumenal. Residues 462–482 traverse the membrane as a helical segment; sequence VLVAAYLFQTGYGHFSYFWIK. The Cytoplasmic segment spans residues 483 to 486; the sequence is GDFG. A helical membrane pass occupies residues 487–507; sequence IHRVCQVLFRLNFLVVVLCIV. Topologically, residues 508-513 are lumenal; it reads MDRPYQ. The helical transmembrane segment at 514-534 threads the bilayer; sequence FYYFVPLVTVWFMVIYVTLAL. At 535-546 the chain is on the cytoplasmic side; that stretch reads WPQITQKKANGN. A helical membrane pass occupies residues 547-567; sequence FFWYLGLLLKLGLLLLCIWFL. Over 568–599 the chain is Lumenal; sequence AYSQGAFEKIFSLWPLSKCFELEGSVYEWWFR. A helical transmembrane segment spans residues 600–620; that stretch reads WRLDRYVVFHGVLFAFIYLAL. Residues 621–638 are Cytoplasmic-facing; sequence QRRQILSEGKGEPLFSNK. Residues 639–659 traverse the membrane as a helical segment; sequence ISNFLLFVSVVSFLTYSIWAS. At 660 to 671 the chain is on the lumenal side; sequence SCKNKAECNELH. The chain crosses the membrane as a helical span at residues 672–692; the sequence is PSVSVVQIVAFILIRNIPGYA. Over 693–698 the chain is Cytoplasmic; sequence RSIYSS. Residues 699 to 719 traverse the membrane as a helical segment; the sequence is FFAWFGKISLELFICQYHIWL. The Lumenal portion of the chain corresponds to 720 to 725; sequence AADTRG. A helical transmembrane segment spans residues 726–746; the sequence is ILVLIPGNPTLNIIVSTFIFV. The Cytoplasmic segment spans residues 747–770; it reads CVAHEISQITTDLAQVVIPKDNPS. Residues 771-791 traverse the membrane as a helical segment; that stretch reads LFRRLACTIAFFGGVLILSSI. Residues 792–797 lie on the Lumenal side of the membrane; that stretch reads QDKSRL.

Belongs to the PC-esterase family. CASD1 subfamily. Post-translationally, N-glycosylated. As to expression, ubiquitously expressed.

It localises to the golgi apparatus membrane. It catalyses the reaction CMP-N-acetyl-beta-neuraminate + acetyl-CoA = CMP-N-acetyl-9-O-acetyl-beta-neuraminate + CoA. The catalysed reaction is a ganglioside GD3 (d18:1(4E)) + acetyl-CoA = a ganglioside Ac-O-7-GD3(d18:1(4E)) + CoA. It carries out the reaction CMP-N-acetyl-beta-neuraminate + acetyl-CoA = CMP-N-acetyl-7-O-acetyl-beta-neuraminate + CoA. Functionally, key enzyme in the biosynthesis of O-acetylated (O-Ac) sialoglycans such as gangliosides O-AcGD3 and O-AcGD2, which affect various processes such as cell-cell interactions, host-pathogen recognition. Catalyzes the transfer of an acetyl group from a donor, the acetyl-coenzyme-A molecule (acetyl-CoA), to the C7/8/9 OH-position of a sialic acid residue. The primary site of O-acetyl group transfer on sialic acid seems to depend on cell type and can be C7, from which the O-acetyl group could subsequently migrate to the C8 and then to the C9 position, or at C9 with possibility of migrating to the C8 and then to the C7 position. Together with ST8SIA1 (GD3 synthase) it increases the levels of ganglioside Ac-O-7-GD3. Can transfer the acetyl group from acetyl-CoA to free sialate (N-acetylneuraminate, Neu5Ac) in vitro, but has preferred substrate specificity for CMP-activated sialate (CMP-Neu5Ac), resulting in the formation of 9-O-acetylated CMP-Neu5Ac (CMP-Neu5,9Ac2). CMP-Neu5,9Ac2 may be used by sialyltransferases as a sialate donor for glycoconjugate acceptors such as ganglioside GD3. O-acetylation at position C9 of ganglioside GD3 can counteract the pro-apoptotic effects of the ganglioside GD3 in tumor cells. The chain is N-acetylneuraminate (7)9-O-acetyltransferase from Mus musculus (Mouse).